The chain runs to 58 residues: Attractin (58 aa).

Cystine bridges form between C4/C41, C13/C33, and C20/C26. N-linked (GlcNAc...) asparagine glycosylation is present at N8.

In terms of tissue distribution, produced by the albumen gland of the egg cordons.

It localises to the secreted. Functionally, water-borne pheromone that attract the marine mollusk Aplysia into breeding aggregations and coordinate male and female reproductive behavior within the aggregation. The protein is Attractin (ATT) of Aplysia fasciata (Mottled sea hare).